The chain runs to 144 residues: Large ribosomal subunit protein uL11 (144 aa).

The protein belongs to the universal ribosomal protein uL11 family. As to quaternary structure, part of the ribosomal stalk of the 50S ribosomal subunit. Interacts with L10 and the large rRNA to form the base of the stalk. L10 forms an elongated spine to which L12 dimers bind in a sequential fashion forming a multimeric L10(L12)X complex. Post-translationally, one or more lysine residues are methylated.

Forms part of the ribosomal stalk which helps the ribosome interact with GTP-bound translation factors. This is Large ribosomal subunit protein uL11 from Francisella tularensis subsp. mediasiatica (strain FSC147).